We begin with the raw amino-acid sequence, 89 residues long: Small ribosomal subunit protein uS14 (89 aa).

This sequence belongs to the universal ribosomal protein uS14 family. As to quaternary structure, part of the 30S ribosomal subunit. Contacts proteins S3 and S10.

Functionally, binds 16S rRNA, required for the assembly of 30S particles and may also be responsible for determining the conformation of the 16S rRNA at the A site. The chain is Small ribosomal subunit protein uS14 from Deinococcus radiodurans (strain ATCC 13939 / DSM 20539 / JCM 16871 / CCUG 27074 / LMG 4051 / NBRC 15346 / NCIMB 9279 / VKM B-1422 / R1).